Reading from the N-terminus, the 764-residue chain is Dehydrocurvularin biosynthesis regulator (764 aa).

Positions 28 to 59 (CWECKRRKMKCIFDPRITSTSCNGCRQRGSPC) form a DNA-binding region, zn(2)-C6 fungal-type. Disordered stretches follow at residues 73–94 (HGANDSASLDASTPIATPSDDA), 112–136 (YRYLPSSKSSDKRFTTRSSNDASTC), and 633–672 (FPTSINTNSDPVHVHSQADFPSSTQLSSSSHPNTPSPALS). Polar residues predominate over residues 77–88 (DSASLDASTPIA). Positions 663–672 (HPNTPSPALS) are enriched in polar residues.

The protein localises to the nucleus. Functionally, transcription factor involved in regulation of the dehydrocurvularin biosynthesis gene cluster. The protein is Dehydrocurvularin biosynthesis regulator of Alternaria cinerariae.